The sequence spans 466 residues: UDP-N-acetylmuramoylalanine--D-glutamate ligase (466 aa).

Residue 121–127 (GTNGKST) coordinates ATP.

This sequence belongs to the MurCDEF family.

The protein resides in the cytoplasm. The catalysed reaction is UDP-N-acetyl-alpha-D-muramoyl-L-alanine + D-glutamate + ATP = UDP-N-acetyl-alpha-D-muramoyl-L-alanyl-D-glutamate + ADP + phosphate + H(+). Its pathway is cell wall biogenesis; peptidoglycan biosynthesis. Cell wall formation. Catalyzes the addition of glutamate to the nucleotide precursor UDP-N-acetylmuramoyl-L-alanine (UMA). The sequence is that of UDP-N-acetylmuramoylalanine--D-glutamate ligase from Nitrobacter hamburgensis (strain DSM 10229 / NCIMB 13809 / X14).